The following is a 393-amino-acid chain: S-adenosylmethionine synthase 2 (393 aa).

Glu9 contacts Mg(2+). Position 15 (His15) interacts with ATP. Glu43 is a binding site for K(+). L-methionine-binding residues include Glu56 and Gln99. Residues 167–169 (DGK), 235–238 (SGRF), Asp246, 252–253 (RK), Ala269, Lys273, and Lys277 contribute to the ATP site. Residue Asp246 participates in L-methionine binding. Position 277 (Lys277) interacts with L-methionine.

This sequence belongs to the AdoMet synthase family. In terms of assembly, homotetramer. The cofactor is Mn(2+). Mg(2+) serves as cofactor. Co(2+) is required as a cofactor. Requires K(+) as cofactor. It depends on NH4(+) as a cofactor. Mostly expressed in roots, and, to a lower extent, in hypocotyls and cotyledons.

The protein localises to the cytoplasm. The enzyme catalyses L-methionine + ATP + H2O = S-adenosyl-L-methionine + phosphate + diphosphate. Its pathway is amino-acid biosynthesis; S-adenosyl-L-methionine biosynthesis; S-adenosyl-L-methionine from L-methionine: step 1/1. With respect to regulation, inhibited by products of SAMS reaction (SAM, Pi, PPi), substrate analogs (cycloleucine and ethionine), and alternative nucleotides (GTP, CTP and ADP). Strongly repressed by PPPi. Functionally, catalyzes the formation of S-adenosylmethionine from methionine and ATP. The reaction comprises two steps that are both catalyzed by the same enzyme: formation of S-adenosylmethionine (AdoMet) and triphosphate, and subsequent hydrolysis of the triphosphate. The sequence is that of S-adenosylmethionine synthase 2 (SAMS2) from Catharanthus roseus (Madagascar periwinkle).